Reading from the N-terminus, the 140-residue chain is Biopolymer transport protein exbD1 (140 aa).

Topologically, residues 1 to 16 (MAFSSGNSGGPMADIN) are cytoplasmic. The chain crosses the membrane as a helical span at residues 17–37 (VTPLVDVMLVLLIIFIITAPL). The Periplasmic portion of the chain corresponds to 38–140 (MSHKVKVELP…GFVATKEKGQ (103 aa)).

This sequence belongs to the ExbD/TolR family. The accessory proteins ExbB and ExbD seem to form a complex with TonB.

Its subcellular location is the cell inner membrane. Involved in the TonB-dependent energy-dependent transport of various receptor-bound substrates. In Xanthomonas campestris pv. campestris (strain B100), this protein is Biopolymer transport protein exbD1 (exbD1).